Reading from the N-terminus, the 331-residue chain is Protein REVEILLE 6 (331 aa).

Residues 67 to 121 enclose the HTH myb-type domain; the sequence is TITKSRESWTEPEHDKFLEALQLFDRDWKKIEAFIGSKTVIQIRSHAQKYFLKVQ. The H-T-H motif DNA-binding region spans 94–117; the sequence is WKKIEAFIGSKTVIQIRSHAQKYF. Disordered stretches follow at residues 122–166, 203–237, and 309–331; these read KSGT…EPND, LPKA…GNVG, and SETA…EIST. Polar residues predominate over residues 150-165; that stretch reads VQLQVPGSFKSTSEPN. Residues 211–220 are compositionally biased toward low complexity; the sequence is NNNCSSSSEN. Composition is skewed to basic and acidic residues over residues 226-235 and 322-331; these read SNRDARDHGN and LNKDPPEIST.

It localises to the nucleus. Probable transcription factor. RVE4, RVE6 and RVE8 are components of the circadian system acting synergistically to regulate flowering time, redundantly to regulate leaf growth, and antagonistically to regulate hypocotyl elongation; their action seems independent of ZTL and HY5. The sequence is that of Protein REVEILLE 6 from Arabidopsis thaliana (Mouse-ear cress).